A 38-amino-acid polypeptide reads, in one-letter code: Large ribosomal subunit protein bL36 (38 aa).

This sequence belongs to the bacterial ribosomal protein bL36 family.

This Pseudothermotoga lettingae (strain ATCC BAA-301 / DSM 14385 / NBRC 107922 / TMO) (Thermotoga lettingae) protein is Large ribosomal subunit protein bL36.